The sequence spans 229 residues: Ribonuclease 3 (229 aa).

The 130-residue stretch at 4–133 folds into the RNase III domain; that stretch reads WEELQESVGF…FIGALYLDNG (130 aa). A Mg(2+)-binding site is contributed by Glu46. Residue Asp50 is part of the active site. The Mg(2+) site is built by Asp119 and Glu122. The active site involves Glu122. One can recognise a DRBM domain in the interval 159-228; that stretch reads DYKTQLQEIV…AQFAINQLTH (70 aa).

Belongs to the ribonuclease III family. In terms of assembly, homodimer. Mg(2+) is required as a cofactor.

The protein resides in the cytoplasm. It catalyses the reaction Endonucleolytic cleavage to 5'-phosphomonoester.. In terms of biological role, digests double-stranded RNA. Involved in the processing of primary rRNA transcript to yield the immediate precursors to the large and small rRNAs (23S and 16S). Processes some mRNAs, and tRNAs when they are encoded in the rRNA operon. Processes pre-crRNA and tracrRNA of type II CRISPR loci if present in the organism. This Listeria monocytogenes serotype 4a (strain HCC23) protein is Ribonuclease 3.